A 291-amino-acid chain; its full sequence is Small ribosomal subunit protein uS2 (291 aa).

Residues 256-291 are disordered; it reads LRGEGTAPAASEEQPAEEPAPAAAEAQTDAAVGTAV. The segment covering 261–291 has biased composition (low complexity); that stretch reads TAPAASEEQPAEEPAPAAAEAQTDAAVGTAV.

This sequence belongs to the universal ribosomal protein uS2 family.

This Frankia alni (strain DSM 45986 / CECT 9034 / ACN14a) protein is Small ribosomal subunit protein uS2.